The primary structure comprises 641 residues: MELKNIEQQPQLQNGNGTATENNEKGEQKPTEGGERTNWGNGLEFLMSCISVSVGLGNVWRFPFTAYENGGGAFLIPYIIVLFLIGKPMYYLEMIIGQFTSQGSVKIWSICPSFLGVGYGQAFATVCIISYYSSLLALTLYYLFVSFQSVLPWSYCRDEWTNCVNSRPEDYSSTMLEAARNATSSLLIGNETTSLADNDSVQLQSSSELYFLNVVIKEKLDISDGVGAPDWKLTLALLVSWIVTFLVIMRGVKSSGKAAYFLAIFPYVVLFVLLGRAVTLEGAVDGIIFFLQPQWGELLNPTVWKEAVVQCFFSLAVSCGPIIMFASYNRFDHSIYRDAMIVTTLDTLTSLLGGITIFAILGNLAHNLQVDNIREVVRSGTGLAFISYPDAISKFQAVPQLFSVLFFFMLFVLGIGSIVALQSTIVTIICDQFKSWKYWKVALVTSICGFLLGLVYVTPGGQWILTLVDFYGGTYVVFILAIFELAGIVWIYGLQNFCDDIEFMCNKRVSLYWRVCWSFFTPVMMIIIFIYSMATIEPLKYSDLYFPLAGDIAGWIVFAIGTAQFPLWGIWYISHHRNGNLWQSFVSCLKPNENWGPANPETKQAWLLFKSEKARQRASKTQSSKMGQFWQKVGNFCGSST.

A compositionally biased stretch (polar residues) spans 1–21; the sequence is MELKNIEQQPQLQNGNGTATE. Residues 1–37 are disordered; that stretch reads MELKNIEQQPQLQNGNGTATENNEKGEQKPTEGGERT. Residues 1–38 lie on the Cytoplasmic side of the membrane; the sequence is MELKNIEQQPQLQNGNGTATENNEKGEQKPTEGGERTN. Basic and acidic residues predominate over residues 22 to 35; that stretch reads NNEKGEQKPTEGGE. 3 helical membrane passes run 39–59, 72–92, and 125–145; these read WGNG…LGNV, GAFL…MYYL, and TVCI…YLFV. Residues N181, N190, and N198 are each glycosylated (N-linked (GlcNAc...) asparagine). A run of 9 helical transmembrane segments spans residues 229-249, 258-278, 307-327, 341-361, 401-421, 441-461, 474-494, 516-536, and 552-572; these read PDWK…LVIM, AAYF…GRAV, AVVQ…MFAS, IVTT…FAIL, LFSV…IVAL, VALV…TPGG, TYVV…IYGL, CWSF…MATI, and IAGW…GIWY.

The protein belongs to the sodium:neurotransmitter symporter (SNF) (TC 2.A.22) family.

It is found in the membrane. Functionally, unusual broad substrate spectrum amino acid:sodium cotransporter that promotes absorption of the D isomers of essential amino acids. Neutral amino acids are the preferred substrates, especially methionine and phenylalanine. The sequence is that of Sodium-dependent nutrient amino acid transporter 1 from Drosophila willistoni (Fruit fly).